The chain runs to 881 residues: Dynamin-like GTPase MGM1, mitochondrial (881 aa).

A mitochondrion-targeting transit peptide spans 1 to 59 (MNASPVRLLILRRQLATHPAILYSSPYIKSPLVHLHSRMSNVHRSAHANALSFVITRRS). The Mitochondrial matrix segment spans residues 60–72 (ISHFPKIISKIIR). The chain crosses the membrane as a helical; Signal-anchor for type II membrane protein span at residues 73 to 92 (LPIYVGGGMAAAGSYIAYKM). The Mitochondrial intermembrane segment spans residues 93–881 (EEASSFTKDK…KSYKGVSKNL (789 aa)). The segment at 145 to 183 (ATSLDDDESKRQGDPKDDDDEDDDDEDDENDSVDTTQDE) is disordered. Positions 160 to 176 (KDDDDEDDDDEDDENDS) are enriched in acidic residues. The 299-residue stretch at 207 to 505 (HLTLPSIVVI…LEISMSNALE (299 aa)) folds into the Dynamin-type G domain. A G1 motif region spans residues 217–224 (GSQSSGKS). The GTP site is built by S220, S221, G222, K223, S224, S225, and G239. S224 is a Mg(2+) binding site. A G2 motif region spans residues 243 to 245 (VTR). T244 and D317 together coordinate Mg(2+). The interval 317–320 (DLPG) is G3 motif. Positions 385–388 (TKLD) are G4 motif. GTP contacts are provided by K386, D388, and T415. Residues 414 to 417 (ITKT) form a G5 motif region. Positions 668-780 (STADQVENCI…KMLKNKCHST (113 aa)) are paddle region. A disulfide bridge links C777 with C786. Residues 780-872 (TIEKDRCPEV…KIDSILVFKK (93 aa)) form the GED domain.

This sequence belongs to the TRAFAC class dynamin-like GTPase superfamily. Dynamin/Fzo/YdjA family. In terms of assembly, oligomeric complex consisting of membrane-bound and soluble forms of MGM1. Associates with FZO1 through interaction with the intermembrane space domain of UGO1 which binds FZO1 through its cytoplasmic domain. Post-translationally, cleavage of the transit peptide by mitochondrial processing protease (MPP) produces a long integral membrane form of MGM1 (l-MGM1). Further processing by the rhomboid protease PCP1 produces a short peripheral membrane form of MGM1 (s-MGM1). Both isoforms are required for full activity.

Its subcellular location is the mitochondrion inner membrane. It is found in the mitochondrion intermembrane space. It catalyses the reaction GTP + H2O = GDP + phosphate + H(+). Dynamin-related GTPase that is essential for normal mitochondrial morphology by mediating fusion of the mitochondrial inner membranes, regulating cristae morphology and maintaining respiratory chain function. Exists in two forms: the transmembrane, long form (Dynamin-like GTPase MGM1, long form; L-MGM1), which is tethered to the inner mitochondrial membrane, and the short soluble form (Dynamin-like GTPase MGM1, short form; S-MGM1), which results from proteolytic cleavage and localizes in the intermembrane space. Both forms (L-MGM1 and S-MGM1) cooperate to catalyze the fusion of the mitochondrial inner membrane. The equilibrium between L-MGM1 and S-MGM1 is essential: excess levels of S-MGM1, following loss of mitochondrial membrane potential, lead to an impaired equilibrium between L-MGM1 and S-MGM1, inhibiting mitochondrial fusion. Plays a role in the maintenance and remodeling of mitochondrial cristae, some invaginations of the mitochondrial inner membrane that provide an increase in the surface area. Probably acts by forming helical filaments at the inside of inner membrane tubes with the shape and dimensions of crista junctions. Its function is as follows. Constitutes the transmembrane long form (L-MGM1) that plays a central role in mitochondrial inner membrane fusion and cristae morphology. L-MGM1 and the soluble short form (S-MGM1) form higher-order helical assemblies that coordinate the fusion of mitochondrial inner membranes. Inner membrane-anchored L-MGM1 molecules initiate membrane remodeling by recruiting soluble S-MGM1 to rapidly polymerize into a flexible cylindrical scaffold encaging the mitochondrial inner membrane. Once at the membrane surface, the formation of S-MGM1 helices induce bilayer curvature. MGM1 dimerization through the paddle region, which inserts into cardiolipin-containing membrane, promotes GTP hydrolysis and the helical assembly of a flexible MGM1 lattice on the membrane, which drives membrane curvature and mitochondrial fusion. Functionally, constitutes the soluble short form (S-MGM1) generated by cleavage by PCP1, which plays a central role in mitochondrial inner membrane fusion and cristae morphology. The transmembrane long form (L-MGM1) and the S-MGM1 form higher-order helical assemblies that coordinate the fusion of mitochondrial inner membranes. Inner membrane-anchored L-MGM1 molecules initiate membrane remodeling by recruiting soluble S-MGM1 to rapidly polymerize into a flexible cylindrical scaffold encaging the mitochondrial inner membrane. Once at the membrane surface, the formation of S-MGM1 helices induce bilayer curvature. MGM1 dimerization through the paddle region, which inserts into cardiolipin-containing membrane, promotes GTP hydrolysis and the helical assembly of a flexible MGM1 lattice on the membrane, which drives membrane curvature and mitochondrial fusion. Excess levels of S-MGM1 produced by cleavage by PCP1 following stress conditions that induce loss of mitochondrial membrane potential, lead to an impaired equilibrium between L-MGM1 and S-MGM1, thereby inhibiting mitochondrial fusion. The chain is Dynamin-like GTPase MGM1, mitochondrial from Saccharomyces cerevisiae (strain ATCC 204508 / S288c) (Baker's yeast).